Here is a 366-residue protein sequence, read N- to C-terminus: MDAVGFAKYPFTQEALSYVRDRNYSMEDILQKPAYGQVRLRAKKRVLNSIKGDVQADDLLPDPERELLSYPVARMLVAMTEDQYLMKRFALWESKRAYTLLLDESDTGLMDVGRDFGITARAKDREFIIHFTDYLRYAAGLRNLEWKLINRKVVAGMVYVSRETFTRLLEEAVREKIQAGFGAKVPAEMKPVLEPYLAEIRESLDKLKSEKGLSGDGEVTQDSFPPCMKNLLADLQKGINLPHTARFALTSFLANIGLDKDAIMDLYRMAPDFREDLTHYQVQHITGGSGTEYTCPGCKTMMTYGNCIGKNKLCEYVTHPLSYYRKSQRRRAKEMAAAQAFKGSKDKAVDTVAENVHVETGNSPGN.

Positions 227, 298, 307, and 314 each coordinate [4Fe-4S] cluster.

The protein belongs to the eukaryotic-type primase large subunit family. Heterodimer of a small subunit (PriS) and a large subunit (PriL). Requires [4Fe-4S] cluster as cofactor.

In terms of biological role, regulatory subunit of DNA primase, an RNA polymerase that catalyzes the synthesis of short RNA molecules used as primers for DNA polymerase during DNA replication. Stabilizes and modulates the activity of the small subunit, increasing the rate of DNA synthesis, and conferring RNA synthesis capability. The DNA polymerase activity may enable DNA primase to also catalyze primer extension after primer synthesis. May also play a role in DNA repair. This is DNA primase large subunit PriL from Methanocella arvoryzae (strain DSM 22066 / NBRC 105507 / MRE50).